The following is a 401-amino-acid chain: Tyrosine--tRNA ligase (401 aa).

A 'HIGH' region motif is present at residues 42–51 (PTAPDLHLGH). Residues 226–230 (KMSKS) carry the 'KMSKS' region motif. K229 contacts ATP. Residues 336–397 (IALAQLLKQI…GKRRIAKLSI (62 aa)) form the S4 RNA-binding domain.

The protein belongs to the class-I aminoacyl-tRNA synthetase family. TyrS type 2 subfamily. Homodimer.

Its subcellular location is the cytoplasm. The catalysed reaction is tRNA(Tyr) + L-tyrosine + ATP = L-tyrosyl-tRNA(Tyr) + AMP + diphosphate + H(+). Catalyzes the attachment of tyrosine to tRNA(Tyr) in a two-step reaction: tyrosine is first activated by ATP to form Tyr-AMP and then transferred to the acceptor end of tRNA(Tyr). This Legionella pneumophila (strain Paris) protein is Tyrosine--tRNA ligase.